The primary structure comprises 355 residues: Protein AMBP (355 aa).

3-hydroxy-L-kynurenine is bound by residues Cys55 and Lys138. The cysteines at positions 92 and 189 are disulfide-linked. Asn145 is a glycosylation site (N-linked (GlcNAc...) asparagine). Lys150 lines the 3-hydroxy-L-kynurenine pocket. N-linked (GlcNAc...) asparagine glycosylation is found at Asn231 and Asn255. Cystine bridges form between Cys236/Cys286, Cys245/Cys269, Cys261/Cys282, Cys292/Cys342, Cys301/Cys325, and Cys317/Cys338. BPTI/Kunitz inhibitor domains follow at residues 236–286 (CKAA…LQRC) and 292–342 (CRLP…QEYC).

This sequence in the N-terminal section; belongs to the calycin superfamily. Lipocalin family. As to quaternary structure, I-alpha-I plasma protease inhibitors are assembled from one or two heavy chains (H1, H2 or H3) and one light chain, bikunin. Inter-alpha-inhibitor (I-alpha-I) is composed of H1, H2 and bikunin, inter-alpha-like inhibitor (I-alpha-LI) of H2 and bikunin, and pre-alpha-inhibitor (P-alpha-I) of H3 and bikunin. In terms of processing, the precursor is proteolytically processed into two separately functioning proteins. Post-translationally, 3-hydroxykynurenine, an oxidized tryptophan metabolite that is common in biological fluids, reacts with Cys-55, Lys-138, and Lys-150 to form heterogeneous polycyclic chromophores including hydroxanthommatin. The reaction by alpha-1-microglobulin is autocatalytic. The chromophore can react with accessible cysteines forming non-reducible thioether cross-links with other molecules of alpha-1-microglobulin or with other proteins. As to expression, expressed by the liver and secreted in plasma.

It localises to the secreted. The sequence is that of Protein AMBP from Pleuronectes platessa (European plaice).